We begin with the raw amino-acid sequence, 238 residues long: uncharacterized protein (238 aa).

Belongs to the HyuE racemase family.

This is an uncharacterized protein from Schizosaccharomyces pombe (strain 972 / ATCC 24843) (Fission yeast).